The primary structure comprises 280 residues: Golgi phosphoprotein 3-like (280 aa).

A disordered region spans residues M1–E30. Basic and acidic residues predominate over residues R10–E30. A 1,2-diacyl-sn-glycero-3-phospho-(1D-myo-inositol 4-phosphate)-binding residues include W62, R71, R152, and R155. The segment at E171–T182 is beta-hairpin required for oligomerization.

The protein belongs to the GOLPH3/VPS74 family. In terms of assembly, homooligomer.

The protein resides in the golgi apparatus. It is found in the golgi stack membrane. The protein localises to the trans-Golgi network membrane. Its function is as follows. Phosphatidylinositol-4-phosphate-binding protein that may play a role in the process of vesicle budding at the Golgi and anterograde transport to the plasma membrane. This Xenopus tropicalis (Western clawed frog) protein is Golgi phosphoprotein 3-like (golph3l).